Reading from the N-terminus, the 201-residue chain is dTTP/UTP pyrophosphatase (201 aa).

Residue Asp76 is the Proton acceptor of the active site.

Belongs to the Maf family. YhdE subfamily. A divalent metal cation serves as cofactor.

It is found in the cytoplasm. It catalyses the reaction dTTP + H2O = dTMP + diphosphate + H(+). The enzyme catalyses UTP + H2O = UMP + diphosphate + H(+). Nucleoside triphosphate pyrophosphatase that hydrolyzes dTTP and UTP. May have a dual role in cell division arrest and in preventing the incorporation of modified nucleotides into cellular nucleic acids. This is dTTP/UTP pyrophosphatase from Neisseria meningitidis serogroup A / serotype 4A (strain DSM 15465 / Z2491).